The following is a 78-amino-acid chain: Large ribosomal subunit protein uL29 (78 aa).

Belongs to the universal ribosomal protein uL29 family.

This Rhodococcus opacus (strain B4) protein is Large ribosomal subunit protein uL29.